Reading from the N-terminus, the 360-residue chain is S-adenosylmethionine:tRNA ribosyltransferase-isomerase (360 aa).

Belongs to the QueA family. As to quaternary structure, monomer.

The protein resides in the cytoplasm. The catalysed reaction is 7-aminomethyl-7-carbaguanosine(34) in tRNA + S-adenosyl-L-methionine = epoxyqueuosine(34) in tRNA + adenine + L-methionine + 2 H(+). It participates in tRNA modification; tRNA-queuosine biosynthesis. Its function is as follows. Transfers and isomerizes the ribose moiety from AdoMet to the 7-aminomethyl group of 7-deazaguanine (preQ1-tRNA) to give epoxyqueuosine (oQ-tRNA). This Nitrobacter winogradskyi (strain ATCC 25391 / DSM 10237 / CIP 104748 / NCIMB 11846 / Nb-255) protein is S-adenosylmethionine:tRNA ribosyltransferase-isomerase.